Reading from the N-terminus, the 290-residue chain is Isopentenyl-diphosphate Delta-isomerase II (290 aa).

The Nudix hydrolase domain occupies 108 to 260 (MLHRAFTVFL…GLKLSPWFRL (153 aa)). Active-site residues include Cys145 and Glu207.

The protein belongs to the IPP isomerase type 1 family.

The catalysed reaction is isopentenyl diphosphate = dimethylallyl diphosphate. The protein operates within isoprenoid biosynthesis; dimethylallyl diphosphate biosynthesis; dimethylallyl diphosphate from isopentenyl diphosphate: step 1/1. It functions in the pathway porphyrin-containing compound metabolism; chlorophyll biosynthesis. Its function is as follows. Catalyzes the 1,3-allylic rearrangement of the homoallylic substrate isopentenyl (IPP) to its highly electrophilic allylic isomer, dimethylallyl diphosphate (DMAPP). In Clarkia xantiana (Gunsight clarkia), this protein is Isopentenyl-diphosphate Delta-isomerase II (IPI2).